The following is a 513-amino-acid chain: Sphingolipid C9-methyltransferase (513 aa).

2 helical membrane passes run 52–72 (ILFS…GLGF) and 74–94 (TWVF…WSIM). Residues 222–223 (YT), 259–267 (VLDIGCGWG), 285–290 (TLGRNQ), and 315–316 (YR) contribute to the S-adenosyl-L-methionine site.

This sequence belongs to the CFA/CMAS family.

Its subcellular location is the membrane. It carries out the reaction a (4E,8E)-4-sphinga-4,8-dienine ceramide + S-adenosyl-L-methionine = a 9-methyl-(4E,8E)-sphinga-4,8-dienine ceramide + S-adenosyl-L-homocysteine + H(+). It participates in lipid metabolism; sphingolipid metabolism. Its function is as follows. Catalyzes methylation of the sphingoid base component of glucosylceramides (GluCers) at the C9-position. Sphingolipid C9-methylation requires 4,8-desaturated ceramides as substrates. Glucosylceramides play important roles in growth, differentiation and pathogenicity. The methyl group at the C9-position distinguishes fungal glucosylceramides from those of plants and animals, and may thus play a role in host-pathogen interactions enabling the host to recognize the fungal attack and initiate specific defense responses. Not necessary for vegetative growth at low temperatures, but plays a role in hyphal formation on solid medium. The chain is Sphingolipid C9-methyltransferase from Candida albicans (strain SC5314 / ATCC MYA-2876) (Yeast).